A 358-amino-acid polypeptide reads, in one-letter code: Probable undecaprenyl-phosphate N-acetylglucosaminyl 1-phosphate transferase (358 aa).

The next 11 membrane-spanning stretches (helical) occupy residues 10–32 (VVAF…RIAI), 53–72 (MGGL…SGIY), 76–93 (RMTA…LGIL), 105–127 (FLIQ…FFSV), 137–157 (GWMA…AINL), 164–181 (LAAG…VMAL), 186–205 (VLIL…FLFY), 218–235 (GSLF…LGLY), 240–262 (LFSI…FAII), 292–311 (MSVL…AIVL), and 316–338 (IWLS…EVTG).

Belongs to the glycosyltransferase 4 family. The cofactor is Mg(2+). Mn(2+) serves as cofactor.

The protein resides in the cell membrane. It carries out the reaction di-trans,octa-cis-undecaprenyl phosphate + UDP-N-acetyl-alpha-D-glucosamine = N-acetyl-alpha-D-glucosaminyl-di-trans,octa-cis-undecaprenyl diphosphate + UMP. It functions in the pathway cell wall biogenesis; poly(glucopyranosyl N-acetylgalactosamine 1-phosphate) teichoic acid biosynthesis. Its pathway is cell wall biogenesis; poly(glycerol phosphate) teichoic acid biosynthesis. Functionally, catalyzes the formation of undecaprenyl-PP-N-acetylglucosamine. Involved in the synthesis of anionic cell-wall polymers as it mediates the initiation of the linkage unit formation that appears to be common to the two types of teichoic acids attached to the peptidoglycan of B.subtilis; may also be involved in teichuronic acid biosynthesis. This chain is Probable undecaprenyl-phosphate N-acetylglucosaminyl 1-phosphate transferase (tagO), found in Bacillus subtilis (strain 168).